A 406-amino-acid polypeptide reads, in one-letter code: Succinylornithine transaminase (406 aa).

N6-(pyridoxal phosphate)lysine is present on Lys-252.

The protein belongs to the class-III pyridoxal-phosphate-dependent aminotransferase family. AstC subfamily. Pyridoxal 5'-phosphate serves as cofactor.

It carries out the reaction N(2)-succinyl-L-ornithine + 2-oxoglutarate = N-succinyl-L-glutamate 5-semialdehyde + L-glutamate. The protein operates within amino-acid degradation; L-arginine degradation via AST pathway; L-glutamate and succinate from L-arginine: step 3/5. Its function is as follows. Catalyzes the transamination of N(2)-succinylornithine and alpha-ketoglutarate into N(2)-succinylglutamate semialdehyde and glutamate. Can also act as an acetylornithine aminotransferase. This chain is Succinylornithine transaminase, found in Escherichia fergusonii (strain ATCC 35469 / DSM 13698 / CCUG 18766 / IAM 14443 / JCM 21226 / LMG 7866 / NBRC 102419 / NCTC 12128 / CDC 0568-73).